A 247-amino-acid polypeptide reads, in one-letter code: C-type lectin domain family 7 member A (247 aa).

Topologically, residues 1 to 44 (MEYHPDLENLDEDGYTQLHFDSQSNTRIAVVSEKGSCAASPPWR) are cytoplasmic. An ITAM-like motif is present at residues 15 to 18 (YTQL). A helical; Signal-anchor for type II membrane protein transmembrane segment spans residues 45–65 (LIAVILGILCLVILVIAVVLG). Residues 66 to 247 (TMAIWRSNSG…YSICEKKFSM (182 aa)) are Extracellular-facing. Residue asparagine 91 is glycosylated (N-linked (GlcNAc...) asparagine). Cystine bridges form between cysteine 120-cysteine 131, cysteine 148-cysteine 241, and cysteine 220-cysteine 233. In terms of domain architecture, C-type lectin spans 127–242 (YEKSCYLFSM…CSVPSYSICE (116 aa)). A (1,3-beta-D-glucosyl)n-binding site is contributed by 146-153 (RQCWQLGS). Residues lysine 157, aspartate 159, and glutamate 163 each contribute to the a divalent metal cation site. Glutamate 195 serves as a coordination point for (1,3-beta-D-glucosyl)n. Residue glutamate 242 coordinates a divalent metal cation.

Homodimer. Interacts with SYK; participates in leukocyte activation in presence of fungal pathogens. Interacts with CD37; this interaction controls CLEC7A-mediated IL-6 production. As to quaternary structure, interacts with RANBP9. In terms of processing, phosphorylated on tyrosine residues in response to beta-glucan binding. As to expression, highly expressed in peripheral blood leukocytes and dendritic cells. Detected in spleen, bone marrow, lung, muscle, stomach and placenta.

It localises to the cell membrane. The protein localises to the cytoplasm. Functionally, lectin that functions as a pattern recognizing receptor (PRR) specific for beta-1,3-linked and beta-1,6-linked glucans, which constitute cell wall constituents from pathogenic bacteria and fungi. Necessary for the TLR2-mediated inflammatory response and activation of NF-kappa-B: upon beta-glucan binding, recruits SYK via its ITAM motif and promotes a signaling cascade that activates some CARD domain-BCL10-MALT1 (CBM) signalosomes, leading to the activation of NF-kappa-B and MAP kinase p38 (MAPK11, MAPK12, MAPK13 and/or MAPK14) pathways which stimulate expression of genes encoding pro-inflammatory cytokines and chemokines. Enhances cytokine production in macrophages and dendritic cells. Mediates production of reactive oxygen species in the cell. Mediates phagocytosis of C.albicans conidia. Binds T-cells in a way that does not involve their surface glycans and plays a role in T-cell activation. Stimulates T-cell proliferation. Induces phosphorylation of SCIMP after binding beta-glucans. The protein is C-type lectin domain family 7 member A of Homo sapiens (Human).